Reading from the N-terminus, the 365-residue chain is Aminomethyltransferase (365 aa).

The protein belongs to the GcvT family. The glycine cleavage system is composed of four proteins: P, T, L and H.

The enzyme catalyses N(6)-[(R)-S(8)-aminomethyldihydrolipoyl]-L-lysyl-[protein] + (6S)-5,6,7,8-tetrahydrofolate = N(6)-[(R)-dihydrolipoyl]-L-lysyl-[protein] + (6R)-5,10-methylene-5,6,7,8-tetrahydrofolate + NH4(+). In terms of biological role, the glycine cleavage system catalyzes the degradation of glycine. The sequence is that of Aminomethyltransferase from Frankia alni (strain DSM 45986 / CECT 9034 / ACN14a).